Here is a 95-residue protein sequence, read N- to C-terminus: Aspartyl/glutamyl-tRNA(Asn/Gln) amidotransferase subunit C (95 aa).

It belongs to the GatC family. Heterotrimer of A, B and C subunits.

The enzyme catalyses L-glutamyl-tRNA(Gln) + L-glutamine + ATP + H2O = L-glutaminyl-tRNA(Gln) + L-glutamate + ADP + phosphate + H(+). It catalyses the reaction L-aspartyl-tRNA(Asn) + L-glutamine + ATP + H2O = L-asparaginyl-tRNA(Asn) + L-glutamate + ADP + phosphate + 2 H(+). In terms of biological role, allows the formation of correctly charged Asn-tRNA(Asn) or Gln-tRNA(Gln) through the transamidation of misacylated Asp-tRNA(Asn) or Glu-tRNA(Gln) in organisms which lack either or both of asparaginyl-tRNA or glutaminyl-tRNA synthetases. The reaction takes place in the presence of glutamine and ATP through an activated phospho-Asp-tRNA(Asn) or phospho-Glu-tRNA(Gln). This chain is Aspartyl/glutamyl-tRNA(Asn/Gln) amidotransferase subunit C, found in Rhodospirillum rubrum (strain ATCC 11170 / ATH 1.1.1 / DSM 467 / LMG 4362 / NCIMB 8255 / S1).